The sequence spans 465 residues: Type II restriction enzyme BsuMI component YdjA (465 aa).

BsuMI restriction activity requires YdiR, YdiS and YdjA.

The enzyme catalyses Endonucleolytic cleavage of DNA to give specific double-stranded fragments with terminal 5'-phosphates.. In terms of biological role, a P subtype restriction enzyme that recognizes the double-stranded sequence 5'-CTCGAG-3'; the cleavage site is unknown. This is Type II restriction enzyme BsuMI component YdjA (ydjA) from Bacillus subtilis (strain 168).